The chain runs to 62 residues: Ribulose bisphosphate carboxylase/oxygenase activase, chloroplastic (62 aa).

It belongs to the RuBisCO activase family.

It is found in the plastid. The protein localises to the chloroplast stroma. Its function is as follows. Activation of RuBisCO (ribulose-1,5-bisphosphate carboxylase/oxygenase; EC 4.1.1.39) involves the ATP-dependent carboxylation of the epsilon-amino group of lysine leading to a carbamate structure. This chain is Ribulose bisphosphate carboxylase/oxygenase activase, chloroplastic, found in Vitis sp. (Grape).